The sequence spans 387 residues: Protein NDRG3 (387 aa).

Residues Pro329–Cys387 form a disordered region. Low complexity predominate over residues Thr359 to Gln377.

This sequence belongs to the NDRG family.

In Xenopus tropicalis (Western clawed frog), this protein is Protein NDRG3.